A 295-amino-acid polypeptide reads, in one-letter code: Release factor glutamine methyltransferase (295 aa).

S-adenosyl-L-methionine contacts are provided by residues 127 to 131 (GTGSG), D150, F179, and N195. A substrate-binding site is contributed by 195–198 (NPPY).

Belongs to the protein N5-glutamine methyltransferase family. PrmC subfamily.

It carries out the reaction L-glutaminyl-[peptide chain release factor] + S-adenosyl-L-methionine = N(5)-methyl-L-glutaminyl-[peptide chain release factor] + S-adenosyl-L-homocysteine + H(+). Methylates the class 1 translation termination release factors RF1/PrfA and RF2/PrfB on the glutamine residue of the universally conserved GGQ motif. This Nitratidesulfovibrio vulgaris (strain ATCC 29579 / DSM 644 / CCUG 34227 / NCIMB 8303 / VKM B-1760 / Hildenborough) (Desulfovibrio vulgaris) protein is Release factor glutamine methyltransferase.